Here is a 100-residue protein sequence, read N- to C-terminus: Large ribosomal subunit protein eL36B (100 aa).

This sequence belongs to the eukaryotic ribosomal protein eL36 family. In terms of assembly, component of the large ribosomal subunit (LSU). Mature yeast ribosomes consist of a small (40S) and a large (60S) subunit. The 40S small subunit contains 1 molecule of ribosomal RNA (18S rRNA) and 33 different proteins (encoded by 57 genes). The large 60S subunit contains 3 rRNA molecules (25S, 5.8S and 5S rRNA) and 46 different proteins (encoded by 81 genes).

It localises to the cytoplasm. Component of the ribosome, a large ribonucleoprotein complex responsible for the synthesis of proteins in the cell. The small ribosomal subunit (SSU) binds messenger RNAs (mRNAs) and translates the encoded message by selecting cognate aminoacyl-transfer RNA (tRNA) molecules. The large subunit (LSU) contains the ribosomal catalytic site termed the peptidyl transferase center (PTC), which catalyzes the formation of peptide bonds, thereby polymerizing the amino acids delivered by tRNAs into a polypeptide chain. The nascent polypeptides leave the ribosome through a tunnel in the LSU and interact with protein factors that function in enzymatic processing, targeting, and the membrane insertion of nascent chains at the exit of the ribosomal tunnel. The polypeptide is Large ribosomal subunit protein eL36B (Saccharomyces cerevisiae (strain ATCC 204508 / S288c) (Baker's yeast)).